A 590-amino-acid polypeptide reads, in one-letter code: Myo-inositol transporter 3A (590 aa).

Over 1-57 the chain is Cytoplasmic; it reads MSATHIENRDDSFLENKGIDHIGRPENNNGSQEPPSPSGFGGHLIDENLVRVEGEDK. Basic and acidic residues predominate over residues 15–24; that stretch reads ENKGIDHIGR. The disordered stretch occupies residues 15-40; it reads ENKGIDHIGRPENNNGSQEPPSPSGF. Residues 58 to 78 form a helical membrane-spanning segment; it reads VTWYLCFLISASAIAGFLFGY. Residues 79–105 lie on the Extracellular side of the membrane; sequence DTGVVGVALPLVGTDLGGSALNSSQQE. The N-linked (GlcNAc...) asparagine glycan is linked to N100. A helical membrane pass occupies residues 106-126; sequence IITAGTTIGAIFGSAILGGWG. Topologically, residues 127–132 are cytoplasmic; it reads DRLGRK. A helical transmembrane segment spans residues 133–153; sequence GAILVSDVFFTIGAVIIASSY. The Extracellular portion of the chain corresponds to 154–157; the sequence is SVPQ. A helical transmembrane segment spans residues 158–178; sequence IIVGRIILGIGVGGAAVIAPL. The Cytoplasmic portion of the chain corresponds to 179-192; that stretch reads FITETAPTAVRGRC. A helical transmembrane segment spans residues 193–213; that stretch reads IGVNAFFIPFGQVVSDAIGAG. Residues 214–222 lie on the Extracellular side of the membrane; sequence VQNMHNGWR. The helical transmembrane segment at 223 to 243 threads the bilayer; it reads LLFALGAVPSLLQLLLFHYLP. Residues 244-325 are Cytoplasmic-facing; sequence ESPRILILKG…AVSALQAAGQ (82 aa). A helical membrane pass occupies residues 326–346; sequence LTGFNTLLYYAGTLFGLLGLS. At 347 to 349 the chain is on the extracellular side; it reads NPA. The helical transmembrane segment at 350–370 threads the bilayer; the sequence is LGGLIPAGTNAVFVLIGMSLV. Topologically, residues 371 to 376 are cytoplasmic; the sequence is DKVGRR. The helical transmembrane segment at 377–397 threads the bilayer; sequence GLLLIGVPIMLLGHVWNIVSF. The Extracellular portion of the chain corresponds to 398–420; that stretch reads YYMCKPTGGFLDTSYSYDTTDVG. A helical membrane pass occupies residues 421-441; sequence IVIGGIVFFVVGYGLTYSHLV. The Cytoplasmic portion of the chain corresponds to 442-455; it reads WYQAEYLTLEVRSM. A helical membrane pass occupies residues 456–476; that stretch reads GSGIATTVCWIANLVVSVSYL. The Extracellular portion of the chain corresponds to 477–485; that stretch reads SELETMTPS. A helical transmembrane segment spans residues 486 to 506; that stretch reads GTYGFYFGISVIGFVFLVFCL. Residues 507 to 590 lie on the Cytoplasmic side of the membrane; sequence PETKQLSIDE…GGKRTPSASV (84 aa).

It belongs to the major facilitator superfamily. Sugar transporter (TC 2.A.1.1) family.

It localises to the cell membrane. It catalyses the reaction myo-inositol(out) + H(+)(out) = myo-inositol(in) + H(+)(in). Transporter for myo-inositol. In Cryptococcus neoformans var. grubii serotype A (strain H99 / ATCC 208821 / CBS 10515 / FGSC 9487) (Filobasidiella neoformans var. grubii), this protein is Myo-inositol transporter 3A (ITR3A).